A 366-amino-acid polypeptide reads, in one-letter code: Growth/differentiation factor 3 (366 aa).

A signal peptide spans 1–22 (MQPYQRLLALGFLLLTLPWGQT). Residues 23-252 (SEFQDSDLLQ…HCHPSSRKRR (230 aa)) constitute a propeptide that is removed on maturation. N-linked (GlcNAc...) asparagine glycosylation is found at Asn113 and Asn308. Intrachain disulfides connect Cys266-Cys331, Cys295-Cys363, and Cys299-Cys365.

Belongs to the TGF-beta family. Homodimer. Heterodimer (Potential). But, in contrast to other members of this family, cannot be disulfide-linked. In terms of processing, synthesized as large precursor molecule that undergo proteolytic cleavage, releasing the pro-domain from the active, receptor binding, C-terminal region of the molecule. As to expression, primarily in adult bone marrow, spleen, thymus and adipose tissue.

Its subcellular location is the secreted. The protein localises to the cytoplasm. In terms of biological role, growth factor involved in early embryonic development and adipose-tissue homeostasis. During embryogenesis controls formation of anterior visceral endoderm and mesoderm and the establishment of anterior-posterior identity through a receptor complex comprising the receptor ACVR1B and the coreceptor CRIPTO. Regulates adipose-tissue homeostasis and energy balance under nutrient overload in part by signaling through the receptor complex based on ACVR1C and CRIPTO. This is Growth/differentiation factor 3 (Gdf3) from Mus musculus (Mouse).